The sequence spans 94 residues: Cell division topological specificity factor (94 aa).

The protein belongs to the MinE family.

Functionally, prevents the cell division inhibition by proteins MinC and MinD at internal division sites while permitting inhibition at polar sites. This ensures cell division at the proper site by restricting the formation of a division septum at the midpoint of the long axis of the cell. In Clostridioides difficile (strain 630) (Peptoclostridium difficile), this protein is Cell division topological specificity factor.